We begin with the raw amino-acid sequence, 152 residues long: Deoxyuridine 5'-triphosphate nucleotidohydrolase (152 aa).

Substrate is bound by residues 71 to 73, N84, 88 to 90, and M98; these read RSG and LID.

It belongs to the dUTPase family. It depends on Mg(2+) as a cofactor.

It catalyses the reaction dUTP + H2O = dUMP + diphosphate + H(+). Its pathway is pyrimidine metabolism; dUMP biosynthesis; dUMP from dCTP (dUTP route): step 2/2. In terms of biological role, this enzyme is involved in nucleotide metabolism: it produces dUMP, the immediate precursor of thymidine nucleotides and it decreases the intracellular concentration of dUTP so that uracil cannot be incorporated into DNA. The chain is Deoxyuridine 5'-triphosphate nucleotidohydrolase from Shewanella baltica (strain OS185).